A 396-amino-acid chain; its full sequence is Dimethyladenosine transferase 2, mitochondrial (396 aa).

Residues 1 to 19 (MWIPVVGLPRRLRLSALAG) constitute a mitochondrion transit peptide. Residues 44 to 64 (LSDSSPQLWPEPDFRNPPRKA) form a disordered region. Val75, Glu124, and Asp150 together coordinate S-adenosyl-L-methionine. Positions 330–331 (RR) are DNA-binding.

Belongs to the class I-like SAM-binding methyltransferase superfamily. rRNA adenine N(6)-methyltransferase family. KsgA subfamily. In terms of assembly, homodimer. Component of the mitochondrial transcription initiation complex, composed at least of TFB2M, TFAM and POLRMT. In this complex TFAM recruits POLRMT to the promoter whereas TFB2M induces structural changes in POLRMT to enable promoter opening and trapping of the DNA non-template strand. Interacts with mitochondrial RNA polymerase POLRMT. Interacts with TFAM. As to expression, ubiquitously expressed.

It is found in the mitochondrion. It carries out the reaction adenosine in rRNA + S-adenosyl-L-methionine = N(6)-methyladenosine in rRNA + S-adenosyl-L-homocysteine + H(+). S-adenosyl-L-methionine-dependent rRNA methyltransferase which may methylate two specific adjacent adenosines in the loop of a conserved hairpin near the 3'-end of 12S mitochondrial rRNA. Component of the mitochondrial transcription initiation complex, composed at least of TFB2M, TFAM and POLRMT that is required for basal transcription of mitochondrial DNA. In this complex, TFAM recruits POLRMT to a specific promoter whereas TFB2M induces structural changes in POLRMT to enable promoter opening and trapping of the DNA non-template strand. Stimulates transcription independently of the methyltransferase activity. The sequence is that of Dimethyladenosine transferase 2, mitochondrial from Homo sapiens (Human).